Here is a 90-residue protein sequence, read N- to C-terminus: uncharacterized protein (90 aa).

Residues 15–34 (HVLAISTFIATAAVASYFTT) traverse the membrane as a helical segment. The interval 34 to 65 (TKPKTKNEGKNSSALSQQKSGESSNSDAMGKD) is disordered. The span at 43–60 (KNSSALSQQKSGESSNSD) shows a compositional bias: polar residues. N44 carries an N-linked (GlcNAc...) asparagine glycan.

It is found in the mitochondrion membrane. This is an uncharacterized protein from Saccharomyces cerevisiae (strain ATCC 204508 / S288c) (Baker's yeast).